The following is an 80-amino-acid chain: Inner kinetochore subunit MHF2 (80 aa).

The protein belongs to the CENP-X/MHF2 family. In terms of assembly, the MHF histone-fold complex is a heterotetramer of 2 MHF1-MHF2 heterodimers. Together with MPH1/FANCM, forms the FANCM-MHF complex. Component of the inner kinetochore constitutive centromere-associated network (CCAN) (also known as central kinetochore CTF19 complex in yeast), which is composed of at least AME1, CHL4, CNN1, CTF3, CTF19, IML3, MCM16, MCM21, MCM22, MHF1, MHF2, MIF2, NKP1, NKP2, OKP1 and WIP1.

Its function is as follows. DNA-binding component of a FANCM-MHF complex involved in DNA damage repair and genome maintenance. FANCM-MHF promotes gene conversion at blocked replication forks, probably by reversal of the stalled fork. Component of the kinetochore, a multiprotein complex that assembles on centromeric DNA and attaches chromosomes to spindle microtubules, mediating chromosome segregation and sister chromatid segregation during meiosis and mitosis. Component of the inner kinetochore constitutive centromere-associated network (CCAN), which serves as a structural platform for outer kinetochore assembly. This Saccharomyces cerevisiae (strain ATCC 204508 / S288c) (Baker's yeast) protein is Inner kinetochore subunit MHF2.